A 266-amino-acid polypeptide reads, in one-letter code: 3-methyl-2-oxobutanoate hydroxymethyltransferase 2 (266 aa).

Positions 45 and 84 each coordinate Mg(2+). Residues 45–46 (DS), Asp84, and Lys112 each bind 3-methyl-2-oxobutanoate. Glu114 serves as a coordination point for Mg(2+). The Proton acceptor role is filled by Glu181.

This sequence belongs to the PanB family. Homodecamer; pentamer of dimers. It depends on Mg(2+) as a cofactor.

Its subcellular location is the cytoplasm. It carries out the reaction 3-methyl-2-oxobutanoate + (6R)-5,10-methylene-5,6,7,8-tetrahydrofolate + H2O = 2-dehydropantoate + (6S)-5,6,7,8-tetrahydrofolate. It functions in the pathway cofactor biosynthesis; (R)-pantothenate biosynthesis; (R)-pantoate from 3-methyl-2-oxobutanoate: step 1/2. In terms of biological role, catalyzes the reversible reaction in which hydroxymethyl group from 5,10-methylenetetrahydrofolate is transferred onto alpha-ketoisovalerate to form ketopantoate. This Pseudomonas aeruginosa (strain UCBPP-PA14) protein is 3-methyl-2-oxobutanoate hydroxymethyltransferase 2.